A 461-amino-acid chain; its full sequence is Thyroid hormone receptor beta (461 aa).

Residues 1 to 24 (MTPNSMTENGLPAWDKQKPRPDRG) are disordered. Residues 1-106 (MTPNSMTENG…IPSYLDKDEL (106 aa)) form a modulating region. Basic and acidic residues predominate over residues 15-24 (DKQKPRPDRG). The Zn(2+) site is built by C107, C110, C124, C127, C145, C151, C161, and C164. 2 NR C4-type zinc fingers span residues 107-127 (CVVC…CEGC) and 145-169 (CKYE…FKKC). Residues 107 to 181 (CVVCGDKATG…VGMATDLVLD (75 aa)) constitute a DNA-binding region (nuclear receptor). An NR LBD domain is found at 217–461 (EEWELIKTVT…PPLFLEVFED (245 aa)). Positions 244–461 (KFLPEDIGQA…PPLFLEVFED (218 aa)) are interaction with NR2F6. 3,3',5-triiodo-L-thyronine-binding residues include R282, N331, and H435. 3 residues coordinate L-thyroxine: R282, N331, and H435.

It belongs to the nuclear hormone receptor family. NR1 subfamily. Binds DNA as a dimer; homodimer and heterodimer with RXRB. Interacts with the coactivators NCOA1/SRC1, NCOA2/GRIP1, NCOA7 and MED1/TRAP220 in a ligand-inducible manner. Interacts with the corepressor NCOR1 in absence of ligand. Interacts with C1D. Interacts with NR2F6; the interaction impairs the binding of the THRB homodimer and THRB:RXRB heterodimer to T3 response elements. Interacts with PRMT2 and THRSP. Interacts with TACC1; this interaction is decreased in the presence of thyroid hormone T3.

It localises to the nucleus. Functionally, nuclear hormone receptor that can act as a repressor or activator of transcription. High affinity receptor for thyroid hormones, including triiodothyronine and thyroxine. The sequence is that of Thyroid hormone receptor beta (Thrb) from Mus musculus (Mouse).